We begin with the raw amino-acid sequence, 332 residues long: 5-dehydro-2-deoxygluconokinase 1 (332 aa).

It belongs to the carbohydrate kinase PfkB family.

It carries out the reaction 5-dehydro-2-deoxy-D-gluconate + ATP = 6-phospho-5-dehydro-2-deoxy-D-gluconate + ADP + H(+). It functions in the pathway polyol metabolism; myo-inositol degradation into acetyl-CoA; acetyl-CoA from myo-inositol: step 5/7. Its function is as follows. Catalyzes the phosphorylation of 5-dehydro-2-deoxy-D-gluconate (2-deoxy-5-keto-D-gluconate or DKG) to 6-phospho-5-dehydro-2-deoxy-D-gluconate (DKGP). The chain is 5-dehydro-2-deoxygluconokinase 1 from Bacillus cereus (strain ZK / E33L).